Consider the following 135-residue polypeptide: Cofilin-4 (135 aa).

An ADF-H domain is found at 3–135; it reads SCASINDEVI…SQSLVEERCK (133 aa).

This sequence belongs to the actin-binding proteins ADF family.

The protein localises to the cytoplasm. Its subcellular location is the cytoskeleton. In terms of biological role, controls actin polymerization and depolymerization. This Dictyostelium discoideum (Social amoeba) protein is Cofilin-4 (cofE).